Here is a 216-residue protein sequence, read N- to C-terminus: GTP-binding nuclear protein spi1 (216 aa).

The Small GTPase Ran-type domain maps to 6 to 170 (NVPTFKLVLV…LWLARKLVGN (165 aa)). GTP is bound at residue 17–24 (DGGTGKTT). Thr-20 is subject to Phosphothreonine. A switch-I region spans residues 36–44 (KKYIATLGV). Residues Gly-67, 121-124 (NKVD), and 149-151 (SAK) each bind GTP. The segment at 67-83 (GQEKLGGLRDGYYIQGQ) is switch-II.

It belongs to the small GTPase superfamily. Ran family. As to quaternary structure, oligomer of dis3, pim1 and spi1. Found in a nuclear export complex with RanGTP, exportin and pre-miRNA. Interacts with fft3.

The protein localises to the nucleus. Its function is as follows. GTP-binding protein involved in nucleocytoplasmic transport. Required for the import of protein into the nucleus and also for RNA export. In Schizosaccharomyces pombe (strain 972 / ATCC 24843) (Fission yeast), this protein is GTP-binding nuclear protein spi1 (spi1).